The following is a 349-amino-acid chain: uncharacterized protein (349 aa).

A helical transmembrane segment spans residues 16-36; sequence LVITIISTGLIFGMTLVLTGL. The tract at residues 111-139 is disordered; sequence FGAPEHGPGMPRVSEGRSPSKPDEVAASS. Basic and acidic residues predominate over residues 124–134; it reads SEGRSPSKPDE. 3 consecutive transmembrane segments (helical) span residues 231-251, 284-304, and 307-327; these read ISIV…SVVY, VIAL…APLF, and IVAV…VIGL.

It belongs to the ABC-4 integral membrane protein family. In terms of assembly, the complex is composed of two ATP-binding proteins (MT0079), two transmembrane proteins (MT0078) and a solute-binding protein.

Its subcellular location is the cell membrane. Its function is as follows. Probably part of an ABC transporter complex. Probably responsible for the translocation of the substrate across the membrane. This is an uncharacterized protein from Mycobacterium tuberculosis (strain CDC 1551 / Oshkosh).